Here is a 442-residue protein sequence, read N- to C-terminus: Radical S-adenosyl methionine domain-containing protein 1, mitochondrial (442 aa).

A mitochondrion-targeting transit peptide spans 1 to 17 (MVPSGVRTGRWVAAARA). The 237-residue stretch at 34–270 (ESASTRAALY…RTVLRDAGFR (237 aa)) folds into the Radical SAM core domain. Tyrosine 43 is a binding site for S-adenosyl-L-methionine. [4Fe-4S] cluster contacts are provided by cysteine 49, cysteine 53, and cysteine 56. S-adenosyl-L-methionine is bound by residues glycine 98, 99-100 (GT), glutamate 131, glutamine 158, arginine 170, and aspartate 195.

Belongs to the anaerobic coproporphyrinogen-III oxidase family. HemW subfamily. It depends on [4Fe-4S] cluster as a cofactor.

It localises to the mitochondrion. Functionally, may be a heme chaperone, appears to bind heme. Homologous bacterial proteins do not have oxygen-independent coproporphyrinogen-III oxidase activity. Binds 1 [4Fe-4S] cluster. The cluster is coordinated with 3 cysteines and an exchangeable S-adenosyl-L-methionine. This chain is Radical S-adenosyl methionine domain-containing protein 1, mitochondrial (Rsad1), found in Mus musculus (Mouse).